The chain runs to 453 residues: Phosphoglucosamine mutase (453 aa).

Residue Ser-105 is the Phosphoserine intermediate of the active site. The Mg(2+) site is built by Ser-105, Asp-244, Asp-246, and Asp-248. Ser-105 bears the Phosphoserine mark.

This sequence belongs to the phosphohexose mutase family. Mg(2+) serves as cofactor. In terms of processing, activated by phosphorylation.

It catalyses the reaction alpha-D-glucosamine 1-phosphate = D-glucosamine 6-phosphate. In terms of biological role, catalyzes the conversion of glucosamine-6-phosphate to glucosamine-1-phosphate. The chain is Phosphoglucosamine mutase from Chromohalobacter salexigens (strain ATCC BAA-138 / DSM 3043 / CIP 106854 / NCIMB 13768 / 1H11).